Here is a 193-residue protein sequence, read N- to C-terminus: MKVTNAEYMASAYLSSQFPSEMYPEISFIGRSNVGKSSLINTLINRKNLAYTSKQPGKTRTINFFLINKSLYFVDLPGYGFAKVSKTMQKDWEQLVNAYLSQRNTLKLSILIIDGRHGPKDADIDMFDYLLDFERPVLLVATKMDKVKANKRKQRITEMRSALELDQDDELITFSSATGEGKNELWQIIEDLL.

The EngB-type G domain maps to 22-193 (MYPEISFIGR…ELWQIIEDLL (172 aa)). GTP-binding positions include 30 to 37 (GRSNVGKS), 57 to 61 (GKTRT), 75 to 78 (DLPG), 142 to 145 (TKMD), and 174 to 176 (FSS). Mg(2+) contacts are provided by Ser-37 and Thr-59.

This sequence belongs to the TRAFAC class TrmE-Era-EngA-EngB-Septin-like GTPase superfamily. EngB GTPase family. Mg(2+) is required as a cofactor.

Necessary for normal cell division and for the maintenance of normal septation. The protein is Probable GTP-binding protein EngB of Natranaerobius thermophilus (strain ATCC BAA-1301 / DSM 18059 / JW/NM-WN-LF).